The primary structure comprises 122 residues: Large ribosomal subunit protein uL14 (122 aa).

Belongs to the universal ribosomal protein uL14 family. In terms of assembly, part of the 50S ribosomal subunit. Forms a cluster with proteins L3 and L19. In the 70S ribosome, L14 and L19 interact and together make contacts with the 16S rRNA in bridges B5 and B8.

Functionally, binds to 23S rRNA. Forms part of two intersubunit bridges in the 70S ribosome. The sequence is that of Large ribosomal subunit protein uL14 from Limosilactobacillus reuteri (strain DSM 20016) (Lactobacillus reuteri).